Here is a 185-residue protein sequence, read N- to C-terminus: Photosystem I assembly protein Ycf4 (185 aa).

Transmembrane regions (helical) follow at residues 21–43 and 68–90; these read NFFW…ISSY and FYGI…NVGS.

Belongs to the Ycf4 family.

It is found in the plastid. The protein localises to the chloroplast thylakoid membrane. Seems to be required for the assembly of the photosystem I complex. The polypeptide is Photosystem I assembly protein Ycf4 (Aegilops tauschii (Tausch's goatgrass)).